We begin with the raw amino-acid sequence, 672 residues long: MAVIPAKKRGRPRKSVVAEVPYDSLASPVSENSGSKRPRRNASKKAVANFAQLVHAGRDDVINTTQVNNVDDTDDDDFVLNDEGDGEESDNVEIEFENELESTKNEVADLNSSGSGASVRPSGRRNTVQKLRLKKNSTKNMKSSSPGSSLGQKGRPIRLLKDLSSARDKIERIYGLNKEKLLLLAKVKEGFETSVFDFPFKNIQPDSPYFVCLDPPCKKESAYNKVIGDKNRTVYHEINKTEFENMIKLRTKRLKLLIGEVDAEVSTGDKIEFPVLANGKRRGFIYNVGGLVTDIAWLNIEENTDIGKDIQYLAVAVSQYMDEPLNEHLEMFDKEKHSSCIQIFKMNTSTLHCVKVQTIVHSFGEVWDLKWHEGCHAPHLVGCLSFVSQEGTINFLEIIDNATDVHVFKMCEKPSLTLSLADSLITTFDFLSPTTVVCGFKNGFVAEFDLTDPEVPSFYDQVHDSYILSVSTAYSDFEDTVVSTVAVDGYFYIFNPKDIATTKTTVSRFRGSNLVPVVYCPQIYSYIYSDGASSLRAVPSRAAFAVHPLVSRETTITAIGVSRLHPMVLAGSADGSLIITNAARRLLHGIKNSSATQKSLRLWKWDYSIKDDKYRIDSSYEVYPLTVNDVSKAKIDAHGINITCTKWNETSAGGKCYAFSNSAGLLTLEYLS.

Residues 1 to 158 (MAVIPAKKRG…SLGQKGRPIR (158 aa)) are required for DNA-binding. Positions 6–18 (AKKRGRPRKSVVA) form a DNA-binding region, a.T hook. 2 disordered regions span residues 24–45 (SLAS…ASKK) and 67–156 (VNNV…KGRP). Residues 71-100 (DDTDDDDFVLNDEGDGEESDNVEIEFENEL) show a composition bias toward acidic residues. A sufficient for interaction with TFC8 region spans residues 159-672 (LLKDLSSARD…AGLLTLEYLS (514 aa)). A disulfide bond links Cys-375 and Cys-383.

In terms of assembly, heterodimer with TFC8. Component of the TFIIIC complex composed of TFC1, TFC3, TFC4, TFC6, TFC7 and TFC8. The subunits are organized in two globular domains, tauA and tauB, connected by a proteolysis-sensitive and flexible linker. Interacts with TFC1, TFC3, TFC4 and directly with TFC8.

The protein resides in the nucleus. Functionally, TFIIIC mediates tRNA and 5S RNA gene activation by binding to intragenic promoter elements. Upstream of the transcription start site, TFIIIC assembles the initiation complex TFIIIB-TFIIIC-tDNA, which is sufficient for RNA polymerase III recruitment and function. Part of the tauB domain of TFIIIC that binds boxB DNA promoter sites of tRNA and similar genes. Cooperates with TFC3 in DNA binding. This Saccharomyces cerevisiae (strain ATCC 204508 / S288c) (Baker's yeast) protein is Transcription factor tau 91 kDa subunit (TFC6).